A 478-amino-acid chain; its full sequence is Glycogen synthase (478 aa).

Lysine 15 contributes to the ADP-alpha-D-glucose binding site.

It belongs to the glycosyltransferase 1 family. Bacterial/plant glycogen synthase subfamily.

It carries out the reaction [(1-&gt;4)-alpha-D-glucosyl](n) + ADP-alpha-D-glucose = [(1-&gt;4)-alpha-D-glucosyl](n+1) + ADP + H(+). It functions in the pathway glycan biosynthesis; glycogen biosynthesis. Functionally, synthesizes alpha-1,4-glucan chains using ADP-glucose. The chain is Glycogen synthase from Enterobacter sp. (strain 638).